We begin with the raw amino-acid sequence, 371 residues long: Diguanylate cyclase A (371 aa).

Residues 233–366 form the GGDEF domain; that stretch reads ETLSILMIDI…GRNRVTLSKN (134 aa). Residues Asp241, Ile242, and Glu284 each coordinate Mg(2+). Glu284 (proton acceptor) is an active-site residue.

As to quaternary structure, exists as a homodimer and as larger aggregates. Both dimers and aggregates possess DGC activity. The cofactor is Mg(2+). Mn(2+) is required as a cofactor.

It localises to the cytoplasm. The enzyme catalyses 2 GTP = 3',3'-c-di-GMP + 2 diphosphate. Allosterically regulated by a feedback inhibition loop. Its function is as follows. Catalyzes the conversion of GTP to cyclic-di-GMP (c-di-GMP). Shows activity under aerobic and anaerobic reaction conditions. In Treponema denticola (strain ATCC 35405 / DSM 14222 / CIP 103919 / JCM 8153 / KCTC 15104), this protein is Diguanylate cyclase A.